Reading from the N-terminus, the 376-residue chain is 1-acyl-sn-glycerol-3-phosphate acyltransferase 3 (376 aa).

Helical transmembrane passes span 14–34 (VLFLISGLIVNIIQLVFFIIV) and 49–69 (VAELLWLQLIWLFDWWACIKI). The HXXXXD motif signature appears at 92–97 (HRSDID). The next 3 membrane-spanning stretches (helical) occupy residues 98-118 (WLIGWVMAQRVGCLGSSLAIM), 306-326 (LIVVIIWLGFLVFGGFKLLQW), and 335-355 (IILLFVFFLVIATITMQILIQ).

The protein belongs to the 1-acyl-sn-glycerol-3-phosphate acyltransferase family. As to expression, predominantly expressed in pollen.

The protein resides in the membrane. The enzyme catalyses a 1-acyl-sn-glycero-3-phosphate + an acyl-CoA = a 1,2-diacyl-sn-glycero-3-phosphate + CoA. Its pathway is phospholipid metabolism; CDP-diacylglycerol biosynthesis; CDP-diacylglycerol from sn-glycerol 3-phosphate: step 2/3. In terms of biological role, converts lysophosphatidic acid (LPA) into phosphatidic acid by incorporating acyl moiety at the 2 position. Has preference for C-18-CoA substrates compared to C-16-CoA substrates. The sequence is that of 1-acyl-sn-glycerol-3-phosphate acyltransferase 3 (LPAT3) from Arabidopsis thaliana (Mouse-ear cress).